A 1830-amino-acid polypeptide reads, in one-letter code: Guanine nucleotide exchange factor SPIKE 1 (1830 aa).

Position 1 is an N-acetylmethionine (Met1). The tract at residues 285 to 304 (NTGESASPSSPLAPSMTASS) is disordered. Residues 289–304 (SASPSSPLAPSMTASS) show a composition bias toward low complexity. One can recognise a C2 DOCK-type domain in the interval 463–622 (FHCLYVYPVA…NIFKLRLRLC (160 aa)). Phosphoserine is present on Ser1051. The residue at position 1079 (Thr1079) is a Phosphothreonine. Ser1095 carries the phosphoserine modification. The DOCKER domain occupies 1379-1828 (MAFAPVPDLH…LSHYIPAILS (450 aa)).

It belongs to the DOCK family. As to quaternary structure, homodimer. Component of SCAR/WAVE and ARP2/3 complexes. Interacts directly with ARAC4/ROP2, ARAC1/ROP3, ARAC5/ROP4, ARAC6/ROP5, ARAC8/ROP10, ARAC9/ROP8, SCAR1, SCAR2, SCAR3, SCAR4, ABI1, ABI2, ABI3 and ABI4. Binds to the inactive GDP-bound form of ARAC3/ROP6. As to expression, expressed ubiquitously, in roots and aerial organs.

The protein localises to the cytoplasm. It is found in the endoplasmic reticulum membrane. Its subcellular location is the nucleus. Its function is as follows. Guanine nucleotide exchange factor (GEF) for Rho and Rac. GEF proteins activate small GTPases by exchanging bound GDP for free GTP. Controls actin polymerization via the two heteromeric complexes WAVE and actin-related protein (ARP) 2/3. Involved in cytoskeletal reorganization required for cell shape (e.g. trichome and cotyledon) control and tissue development. Prevents cortical microtubules organization into parallel arrays oriented perpendicular to the axis of cell elongation to limit anisotropic cell growth during petal development, probably by triggering ARAC4/ROP2 and ARAC3/ROP6 activity. Promotes polarized growth and cell-cell adhesion in the leaf epidermis probably by promoting the formation of endoplasmic reticulum (ER) exit site (ERES) and/or trafficking between the ER and Golgi. Triggers ARAC3/ROP6 activation required for auxin-mediated inhibition of PIN2 internalization during gravitropic responses (, PubMed:22683260). This Arabidopsis thaliana (Mouse-ear cress) protein is Guanine nucleotide exchange factor SPIKE 1.